Here is a 623-residue protein sequence, read N- to C-terminus: DELLA protein RHT-1 (623 aa).

The segment at 1–27 is disordered; sequence MKREYQDAGGSGGGGGGMGSSEDKMMV. Over residues 9-19 the composition is skewed to gly residues; sequence GGSGGGGGGMG. A DELLA motif motif is present at residues 38–42; the sequence is DELLA. Disordered stretches follow at residues 109–138 and 159–201; these read LNAPPPPLPPAPQLNASTSSTVTGSGGYFD and AGAT…GARS. A compositionally biased stretch (pro residues) spans 111–120; the sequence is APPPPLPPAP. Composition is skewed to low complexity over residues 121-131 and 181-201; these read QLNASTSSTVT and GGSSTSSSSSSSSSLGGGARS. A GRAS domain is found at 225-619; sequence VDTQEAGIRL…RPLIATSAWR (395 aa). A leucine repeat I (LRI) region spans residues 232–288; it reads IRLVHALLACAEAVQQENLSAAEALVKQIPLLAASQGGAMRKVAAYFGEALARRVFR. The short motif at 239–243 is the LxCxE motif element; that stretch reads LACAE. Residues 307-372 form a VHIID region; that stretch reads HAHFYESCPY…GGPPSFRLTG (66 aa). The short motif at 338 to 342 is the VHIID element; sequence VHVVD. Positions 386-425 are leucine repeat II (LRII); that stretch reads QVGWKLAQFAHTIRVDFQYRGLVAATLADLEPFMLQPEGE. The segment at 435–540 is PFYRE; sequence IAVNSVFEMH…EVYLGRQICN (106 aa). Positions 543–619 are SAW; it reads ACEGAERTER…RPLIATSAWR (77 aa).

The protein belongs to the GRAS family. DELLA subfamily. Phosphorylated. Post-translationally, ubiquitinated. Upon GA application it is ubiquitinated, leading to its subsequent degradation.

Its subcellular location is the nucleus. Probable transcriptional regulator that acts as a repressor of the gibberellin (GA) signaling pathway. Probably acts by participating in large multiprotein complexes that repress transcription of GA-inducible genes. Upon GA application, it is degraded by the proteasome, allowing the GA signaling pathway. The sequence is that of DELLA protein RHT-1 (RHT1) from Triticum aestivum (Wheat).